Here is a 73-residue protein sequence, read N- to C-terminus: ComX pheromone (73 aa).

The propeptide occupies 1–52 (MKHIDKIISHLVNNPEAFDQFKNGNLTLLNINEKEKKAILYAFEQGEVPRTS). Residue W54 is the site of 3'-farnesyl-2',N2-cyclotryptophan attachment. The propeptide occupies 59-73 (AISNFFEDDKRKSLI).

Interacts directly with the sensor histidine kinase ComP and stimulates its activity. Post-translationally, trp-54 is modified by farnesylation, which is essential for activity. Modified by the tryptophan prenyltransferase ComQ before export to the extracellular environment.

The protein resides in the secreted. In terms of biological role, part of a major quorum-sensing system that regulates the development of genetic competence. Acts through the activation of the two-component regulatory system ComP/ComA composed of a sensor histidine kinase, ComP, and a response regulator, ComA. Activates the expression of the genes for biosynthesis of poly-gamma-glutamic acid (gamma-PGA), which is involved in biofilm formation in B.subtilis natto. This Bacillus subtilis subsp. natto (strain BEST195) protein is ComX pheromone.